The chain runs to 286 residues: Protein NipSnap homolog 2 (286 aa).

The transit peptide at 1 to 23 (MAARVLRARGAAWAGGLLQRAAP) directs the protein to the mitochondrion.

It belongs to the NipSnap family. Interacts with CALCOCO2/NDP52, NBR1, SQSTM1/p62, TAX1BP1 and WDFY3/ALFY. Interacts with ATG8 family proteins (MAP1LC3A, MAP1LC3B, MAP1LC3C, GABARAP, GABARAPL1 and GABARAPL2). Interacts with VDAC1. As to expression, widely expressed. Most abundant in heart and skeletal muscle.

The protein resides in the mitochondrion matrix. Protein involved in mitophagy by facilitating recruitment of the autophagy machinery required for clearance of damaged mitochondria. Accumulates on the mitochondria surface in response to mitochondrial depolarization and acts as a 'eat me' signal by recruiting proteins involved in selective autophagy, such as autophagy receptors (CALCOCO2/NDP52, NBR1, SQSTM1/p62, TAX1BP1 and WDFY3/ALFY) and ATG8 family proteins (MAP1LC3A, MAP1LC3B, MAP1LC3C, GABARAP, GABARAPL1 and GABARAPL2). The chain is Protein NipSnap homolog 2 from Homo sapiens (Human).